A 210-amino-acid chain; its full sequence is ATP-dependent Clp protease proteolytic subunit (210 aa).

S107 (nucleophile) is an active-site residue. H132 is a catalytic residue.

Belongs to the peptidase S14 family. Fourteen ClpP subunits assemble into 2 heptameric rings which stack back to back to give a disk-like structure with a central cavity, resembling the structure of eukaryotic proteasomes.

It is found in the cytoplasm. It carries out the reaction Hydrolysis of proteins to small peptides in the presence of ATP and magnesium. alpha-casein is the usual test substrate. In the absence of ATP, only oligopeptides shorter than five residues are hydrolyzed (such as succinyl-Leu-Tyr-|-NHMec, and Leu-Tyr-Leu-|-Tyr-Trp, in which cleavage of the -Tyr-|-Leu- and -Tyr-|-Trp bonds also occurs).. Its function is as follows. Cleaves peptides in various proteins in a process that requires ATP hydrolysis. Has a chymotrypsin-like activity. Plays a major role in the degradation of misfolded proteins. The sequence is that of ATP-dependent Clp protease proteolytic subunit from Ruegeria sp. (strain TM1040) (Silicibacter sp.).